The chain runs to 279 residues: Ribonuclease T2 protein rnst-2 (279 aa).

A signal peptide spans 1 to 17 (MKLLLLLCISCIPLAYS). C37 and C48 are joined by a disulfide. H60 is a catalytic residue. Residue N68 is glycosylated (N-linked (GlcNAc...) asparagine). Catalysis depends on residues E114 and H118. A disulfide bridge links C200 with C210.

It belongs to the RNase T2 family. Expressed in the pharynx, hypodermis, muscle cells, sheath cells, intestinal cells, the vulva and tail regions.

The protein localises to the lysosome. The enzyme catalyses a ribonucleotidyl-ribonucleotide-RNA + H2O = a 3'-end 3'-phospho-ribonucleotide-RNA + a 5'-end dephospho-ribonucleoside-RNA + H(+). Functionally, probable endoribonuclease involved in the autophagy-mediated degradation of ribosomal RNA and ribosomal proteins in lysosomes. This is Ribonuclease T2 protein rnst-2 from Caenorhabditis elegans.